The chain runs to 461 residues: Acetylornithine aminotransferase, mitochondrial (461 aa).

Positions 36–56 (YATASQLTHPDPTEDSPSGKM) are disordered. Lys-312 bears the N6-(pyridoxal phosphate)lysine mark.

The protein belongs to the class-III pyridoxal-phosphate-dependent aminotransferase family. The cofactor is pyridoxal 5'-phosphate.

It is found in the mitochondrion matrix. It carries out the reaction N(2)-acetyl-L-ornithine + 2-oxoglutarate = N-acetyl-L-glutamate 5-semialdehyde + L-glutamate. It participates in amino-acid biosynthesis; L-arginine biosynthesis; N(2)-acetyl-L-ornithine from L-glutamate: step 4/4. This chain is Acetylornithine aminotransferase, mitochondrial (arg-8), found in Neurospora crassa (strain ATCC 24698 / 74-OR23-1A / CBS 708.71 / DSM 1257 / FGSC 987).